Here is a 167-residue protein sequence, read N- to C-terminus: Interferon gamma (167 aa).

Positions 1–23 (MNYTGYLLAFQLCIILGSSSCYC) are cleaved as a signal peptide. Gln24 is subject to Pyrrolidone carboxylic acid. Asn39 and Asn105 each carry an N-linked (GlcNAc...) asparagine glycan. A disordered region spans residues 148–167 (SNLRKRKRSQSTFHGRRASI). Residues 149–167 (NLRKRKRSQSTFHGRRASI) show a composition bias toward basic residues.

This sequence belongs to the type II (or gamma) interferon family. In terms of assembly, homodimer. Interacts with IFNGR1 (via extracellular domain); this interaction promotes IFNGR1 dimerization. In terms of tissue distribution, released primarily from activated T lymphocytes.

It is found in the secreted. Functionally, type II interferon produced by immune cells such as T-cells and NK cells that plays crucial roles in antimicrobial, antiviral, and antitumor responses by activating effector immune cells and enhancing antigen presentation. Primarily signals through the JAK-STAT pathway after interaction with its receptor IFNGR1 to affect gene regulation. Upon IFNG binding, IFNGR1 intracellular domain opens out to allow association of downstream signaling components JAK2, JAK1 and STAT1, leading to STAT1 activation, nuclear translocation and transcription of IFNG-regulated genes. Many of the induced genes are transcription factors such as IRF1 that are able to further drive regulation of a next wave of transcription. Plays a role in class I antigen presentation pathway by inducing a replacement of catalytic proteasome subunits with immunoproteasome subunits. In turn, increases the quantity, quality, and repertoire of peptides for class I MHC loading. Increases the efficiency of peptide generation also by inducing the expression of activator PA28 that associates with the proteasome and alters its proteolytic cleavage preference. Up-regulates as well MHC II complexes on the cell surface by promoting expression of several key molecules such as cathepsins B/CTSB, H/CTSH, and L/CTSL. Participates in the regulation of hematopoietic stem cells during development and under homeostatic conditions by affecting their development, quiescence, and differentiation. The chain is Interferon gamma (IFNG) from Dasypus novemcinctus (Nine-banded armadillo).